Reading from the N-terminus, the 159-residue chain is Ribosomal RNA large subunit methyltransferase H (159 aa).

S-adenosyl-L-methionine-binding positions include leucine 76, glycine 108, and 127–132 (FGRLTL).

It belongs to the RNA methyltransferase RlmH family. As to quaternary structure, homodimer.

The protein localises to the cytoplasm. The enzyme catalyses pseudouridine(1915) in 23S rRNA + S-adenosyl-L-methionine = N(3)-methylpseudouridine(1915) in 23S rRNA + S-adenosyl-L-homocysteine + H(+). In terms of biological role, specifically methylates the pseudouridine at position 1915 (m3Psi1915) in 23S rRNA. This is Ribosomal RNA large subunit methyltransferase H from Listeria welshimeri serovar 6b (strain ATCC 35897 / DSM 20650 / CCUG 15529 / CIP 8149 / NCTC 11857 / SLCC 5334 / V8).